Here is a 181-residue protein sequence, read N- to C-terminus: U1 small nuclear ribonucleoprotein C (181 aa).

The Matrin-type zinc finger occupies 2–34; the sequence is PKCDYCDVYLTHDSMSVRKAHNSGRNHLRNVVD. Pro residues-rich tracts occupy residues 129-143 and 150-174; these read PGMP…PGGL and PIPP…PPPG. The disordered stretch occupies residues 129 to 181; the sequence is PGMPAGMPFPPPGGLPPNFQFPIPPPGGFPGMPPPGQGFPGMPPPGGNHDERR.

Belongs to the U1 small nuclear ribonucleoprotein C family. As to quaternary structure, U1 snRNP is composed of the 7 core Sm proteins B/B', D1, D2, D3, E, F and G that assemble in a heptameric protein ring on the Sm site of the small nuclear RNA to form the core snRNP, and at least 3 U1 snRNP-specific proteins U1-70K, U1-A and U1-C. U1-C interacts with U1 snRNA and the 5' splice-site region of the pre-mRNA.

Its subcellular location is the nucleus. In terms of biological role, component of the spliceosomal U1 snRNP, which is essential for recognition of the pre-mRNA 5' splice-site and the subsequent assembly of the spliceosome. U1-C is directly involved in initial 5' splice-site recognition for both constitutive and regulated alternative splicing. The interaction with the 5' splice-site seems to precede base-pairing between the pre-mRNA and the U1 snRNA. Stimulates commitment or early (E) complex formation by stabilizing the base pairing of the 5' end of the U1 snRNA and the 5' splice-site region. The polypeptide is U1 small nuclear ribonucleoprotein C (Sclerotinia sclerotiorum (strain ATCC 18683 / 1980 / Ss-1) (White mold)).